The primary structure comprises 246 residues: 3-deoxy-manno-octulosonate cytidylyltransferase (246 aa).

Belongs to the KdsB family.

It localises to the cytoplasm. The catalysed reaction is 3-deoxy-alpha-D-manno-oct-2-ulosonate + CTP = CMP-3-deoxy-beta-D-manno-octulosonate + diphosphate. Its pathway is nucleotide-sugar biosynthesis; CMP-3-deoxy-D-manno-octulosonate biosynthesis; CMP-3-deoxy-D-manno-octulosonate from 3-deoxy-D-manno-octulosonate and CTP: step 1/1. It functions in the pathway bacterial outer membrane biogenesis; lipopolysaccharide biosynthesis. Functionally, activates KDO (a required 8-carbon sugar) for incorporation into bacterial lipopolysaccharide in Gram-negative bacteria. The protein is 3-deoxy-manno-octulosonate cytidylyltransferase of Leptospira biflexa serovar Patoc (strain Patoc 1 / Ames).